The sequence spans 124 residues: Small ribosomal subunit protein bS6 (124 aa).

Positions 96–124 (ETGPSPMMKEVQREEAKKAAAAQPAEAQA) are disordered. Residues 114 to 124 (AAAAQPAEAQA) are compositionally biased toward low complexity.

The protein belongs to the bacterial ribosomal protein bS6 family.

Its function is as follows. Binds together with bS18 to 16S ribosomal RNA. This Burkholderia orbicola (strain MC0-3) protein is Small ribosomal subunit protein bS6.